The sequence spans 424 residues: Histidinol dehydrogenase (424 aa).

Residues Tyr124, Gln186, and Asn209 each coordinate NAD(+). Residues Ser232, Gln254, and His257 each coordinate substrate. Residues Gln254 and His257 each contribute to the Zn(2+) site. Active-site proton acceptor residues include Glu322 and His323. Substrate is bound by residues His323, Asp356, Glu410, and His415. Asp356 lines the Zn(2+) pocket. His415 lines the Zn(2+) pocket.

The protein belongs to the histidinol dehydrogenase family. Zn(2+) is required as a cofactor.

The enzyme catalyses L-histidinol + 2 NAD(+) + H2O = L-histidine + 2 NADH + 3 H(+). Its pathway is amino-acid biosynthesis; L-histidine biosynthesis; L-histidine from 5-phospho-alpha-D-ribose 1-diphosphate: step 9/9. Functionally, catalyzes the sequential NAD-dependent oxidations of L-histidinol to L-histidinaldehyde and then to L-histidine. This Moorella thermoacetica (strain ATCC 39073 / JCM 9320) protein is Histidinol dehydrogenase.